A 231-amino-acid polypeptide reads, in one-letter code: Large ribosomal subunit protein uL1 (231 aa).

The protein belongs to the universal ribosomal protein uL1 family. Part of the 50S ribosomal subunit.

In terms of biological role, binds directly to 23S rRNA. The L1 stalk is quite mobile in the ribosome, and is involved in E site tRNA release. Its function is as follows. Protein L1 is also a translational repressor protein, it controls the translation of the L11 operon by binding to its mRNA. The sequence is that of Large ribosomal subunit protein uL1 from Alkalilimnicola ehrlichii (strain ATCC BAA-1101 / DSM 17681 / MLHE-1).